The following is a 396-amino-acid chain: Acetate kinase (396 aa).

A Mg(2+)-binding site is contributed by Asn-8. Lys-15 contributes to the ATP binding site. Arg-89 serves as a coordination point for substrate. Asp-146 functions as the Proton donor/acceptor in the catalytic mechanism. Residues 206-210 (HIGNG), 283-285 (DMR), and 331-335 (GMGEN) contribute to the ATP site. Glu-383 provides a ligand contact to Mg(2+).

It belongs to the acetokinase family. In terms of assembly, homodimer. Requires Mg(2+) as cofactor. Mn(2+) is required as a cofactor.

It localises to the cytoplasm. The catalysed reaction is acetate + ATP = acetyl phosphate + ADP. It participates in metabolic intermediate biosynthesis; acetyl-CoA biosynthesis; acetyl-CoA from acetate: step 1/2. In terms of biological role, catalyzes the formation of acetyl phosphate from acetate and ATP. Can also catalyze the reverse reaction. The chain is Acetate kinase from Streptococcus uberis (strain ATCC BAA-854 / 0140J).